The chain runs to 96 residues: Co-chaperonin GroES (96 aa).

Belongs to the GroES chaperonin family. Heptamer of 7 subunits arranged in a ring. Interacts with the chaperonin GroEL.

Its subcellular location is the cytoplasm. Together with the chaperonin GroEL, plays an essential role in assisting protein folding. The GroEL-GroES system forms a nano-cage that allows encapsulation of the non-native substrate proteins and provides a physical environment optimized to promote and accelerate protein folding. GroES binds to the apical surface of the GroEL ring, thereby capping the opening of the GroEL channel. The sequence is that of Co-chaperonin GroES from Haemophilus influenzae (strain ATCC 51907 / DSM 11121 / KW20 / Rd).